The chain runs to 188 residues: uncharacterized protein (188 aa).

Residues 121–139 (IWLYGGASLITTFINLGLV) traverse the membrane as a helical segment.

This sequence to B.subtilis YwjB.

It localises to the membrane. This is an uncharacterized protein from Bacillus subtilis (strain 168).